Reading from the N-terminus, the 668-residue chain is UvrABC system protein B (668 aa).

The 388-residue stretch at 36–423 folds into the Helicase ATP-binding domain; the sequence is DNIKGGEKAQ…TETVVEQIIR (388 aa). ATP is bound at residue 49-56; the sequence is GATGTGKT. The short motif at 102 to 125 is the Beta-hairpin element; sequence YYDYYQPEAYVPSSDTYIEKDSSI. The 167-residue stretch at 440-606 folds into the Helicase C-terminal domain; it reads QMDDLLGEIN…TIKKEIRDLI (167 aa). The region spanning 632 to 667 is the UVR domain; that stretch reads QEAIKKLQKQMHEAAELLDFELAAQIRDMVLELKSM.

The protein belongs to the UvrB family. In terms of assembly, forms a heterotetramer with UvrA during the search for lesions. Interacts with UvrC in an incision complex.

It localises to the cytoplasm. The UvrABC repair system catalyzes the recognition and processing of DNA lesions. A damage recognition complex composed of 2 UvrA and 2 UvrB subunits scans DNA for abnormalities. Upon binding of the UvrA(2)B(2) complex to a putative damaged site, the DNA wraps around one UvrB monomer. DNA wrap is dependent on ATP binding by UvrB and probably causes local melting of the DNA helix, facilitating insertion of UvrB beta-hairpin between the DNA strands. Then UvrB probes one DNA strand for the presence of a lesion. If a lesion is found the UvrA subunits dissociate and the UvrB-DNA preincision complex is formed. This complex is subsequently bound by UvrC and the second UvrB is released. If no lesion is found, the DNA wraps around the other UvrB subunit that will check the other stand for damage. In Streptococcus thermophilus (strain CNRZ 1066), this protein is UvrABC system protein B.